The following is a 332-amino-acid chain: 2,3-diketo-L-gulonate reductase (332 aa).

Residue H44 is the Proton donor of the active site. NAD(+) is bound by residues I168–S174, W224–K225, and G304–E306.

Belongs to the LDH2/MDH2 oxidoreductase family. DlgD subfamily. Homodimer.

It localises to the cytoplasm. It carries out the reaction 3-dehydro-L-gulonate + NAD(+) = 2,3-dioxo-L-gulonate + NADH + H(+). The enzyme catalyses 3-dehydro-L-gulonate + NADP(+) = 2,3-dioxo-L-gulonate + NADPH + H(+). Catalyzes the reduction of 2,3-diketo-L-gulonate in the presence of NADH, to form 3-keto-L-gulonate. The protein is 2,3-diketo-L-gulonate reductase of Salmonella heidelberg (strain SL476).